We begin with the raw amino-acid sequence, 126 residues long: Small ribosomal subunit protein uS12 (126 aa).

A disordered region spans residues 1–29; it reads MPTIQQLIRQPRAPKKRRSKSPALQKCPQ. Aspartate 89 is modified (3-methylthioaspartic acid).

Belongs to the universal ribosomal protein uS12 family. As to quaternary structure, part of the 30S ribosomal subunit. Contacts proteins S8 and S17. May interact with IF1 in the 30S initiation complex.

With S4 and S5 plays an important role in translational accuracy. In terms of biological role, interacts with and stabilizes bases of the 16S rRNA that are involved in tRNA selection in the A site and with the mRNA backbone. Located at the interface of the 30S and 50S subunits, it traverses the body of the 30S subunit contacting proteins on the other side and probably holding the rRNA structure together. The combined cluster of proteins S8, S12 and S17 appears to hold together the shoulder and platform of the 30S subunit. This Protochlamydia amoebophila (strain UWE25) protein is Small ribosomal subunit protein uS12.